We begin with the raw amino-acid sequence, 193 residues long: MNFLAHLHLAHLAESSLSGNLLADFVRGNPEESFPPDVVAGIHMHRRIDVLTDNLPEVREAREWFRNETRRVAPITLDVMWDHFLSRHWSQLSPDFPLQEFTCYAREQVMTILPDSPPRFINLNNYLWSEQWLVRYRDMDFIQSVLNGMASRRPRLDALRDSWYDLDAHYDALETRFWQFYPRMMEQASRKAL.

It belongs to the AcpH family.

The enzyme catalyses holo-[ACP] + H2O = apo-[ACP] + (R)-4'-phosphopantetheine + H(+). In terms of biological role, converts holo-ACP to apo-ACP by hydrolytic cleavage of the phosphopantetheine prosthetic group from ACP. The sequence is that of Acyl carrier protein phosphodiesterase from Escherichia coli O127:H6 (strain E2348/69 / EPEC).